The primary structure comprises 95 residues: Aspartyl/glutamyl-tRNA(Asn/Gln) amidotransferase subunit C (95 aa).

Belongs to the GatC family. In terms of assembly, heterotrimer of A, B and C subunits.

The enzyme catalyses L-glutamyl-tRNA(Gln) + L-glutamine + ATP + H2O = L-glutaminyl-tRNA(Gln) + L-glutamate + ADP + phosphate + H(+). It carries out the reaction L-aspartyl-tRNA(Asn) + L-glutamine + ATP + H2O = L-asparaginyl-tRNA(Asn) + L-glutamate + ADP + phosphate + 2 H(+). Allows the formation of correctly charged Asn-tRNA(Asn) or Gln-tRNA(Gln) through the transamidation of misacylated Asp-tRNA(Asn) or Glu-tRNA(Gln) in organisms which lack either or both of asparaginyl-tRNA or glutaminyl-tRNA synthetases. The reaction takes place in the presence of glutamine and ATP through an activated phospho-Asp-tRNA(Asn) or phospho-Glu-tRNA(Gln). This is Aspartyl/glutamyl-tRNA(Asn/Gln) amidotransferase subunit C from Chlorobaculum tepidum (strain ATCC 49652 / DSM 12025 / NBRC 103806 / TLS) (Chlorobium tepidum).